Consider the following 444-residue polypeptide: Methylenetetrahydrofolate--tRNA-(uracil-5-)-methyltransferase TrmFO (444 aa).

9-14 is an FAD binding site; the sequence is GAGLAG.

The protein belongs to the MnmG family. TrmFO subfamily. Requires FAD as cofactor.

It is found in the cytoplasm. It catalyses the reaction uridine(54) in tRNA + (6R)-5,10-methylene-5,6,7,8-tetrahydrofolate + NADH + H(+) = 5-methyluridine(54) in tRNA + (6S)-5,6,7,8-tetrahydrofolate + NAD(+). It carries out the reaction uridine(54) in tRNA + (6R)-5,10-methylene-5,6,7,8-tetrahydrofolate + NADPH + H(+) = 5-methyluridine(54) in tRNA + (6S)-5,6,7,8-tetrahydrofolate + NADP(+). Functionally, catalyzes the folate-dependent formation of 5-methyl-uridine at position 54 (M-5-U54) in all tRNAs. The protein is Methylenetetrahydrofolate--tRNA-(uracil-5-)-methyltransferase TrmFO of Koribacter versatilis (strain Ellin345).